We begin with the raw amino-acid sequence, 349 residues long: D-arabinose 1-dehydrogenase (NADP(+)) (349 aa).

Cysteine 46, histidine 70, aspartate 99, cysteine 102, cysteine 105, cysteine 113, and aspartate 155 together coordinate Zn(2+).

It belongs to the zinc-containing alcohol dehydrogenase family. In terms of assembly, homotetramer. Dimer of dimers. Requires Zn(2+) as cofactor.

The enzyme catalyses D-arabinose + NADP(+) = D-arabinono-1,4-lactone + NADPH + H(+). Functionally, participates in a pentose oxidation pathway that converts D-arabinose to 2-oxoglutarate. Catalyzes the NADP-dependent conversion of D-arabinose to D-arabinono-1,4-lactone. In vitro, can also use L-fucose, L-galactose and D-ribose. Shows highest activity with L-fucose, in combinaison with NAD, and lower activity toward L-galactose and D-ribose. When acting on its physiological substrate, D-arabinose, shows a clear preference for NADP over NAD. This is D-arabinose 1-dehydrogenase (NADP(+)) from Saccharolobus solfataricus (strain ATCC 35092 / DSM 1617 / JCM 11322 / P2) (Sulfolobus solfataricus).